The following is a 429-amino-acid chain: Zygotic gap protein knirps (429 aa).

Residues 2–78 (NQTCKVCGEP…VGMSKGGSRY (77 aa)) constitute a DNA-binding region (nuclear receptor). 2 consecutive NR C4-type zinc fingers follow at residues 5 to 25 (CKVCGEPAAGFHFGAFTCEGC) and 42 to 66 (CKNEGKCIIDKKNRTTCKACRLRKC). Positions 112–126 (SVGGAPSASSPVGSP) are enriched in low complexity. Disordered stretches follow at residues 112–148 (SVGGAPSASSPVGSPHTPGFGDMAAHLHHHHQQQQQQ), 223–250 (QSVDSVESQNRFSPASQPPVVQPTSSAR), 338–357 (TSRSSVHSFNDSGSEDQEVE), and 375–397 (SSSSSSHSAAHSPNTTTAHAEVK). Polar residues-rich tracts occupy residues 225-237 (VDSVESQNRFSPA) and 338-349 (TSRSSVHSFNDS). Residues 375–393 (SSSSSSHSAAHSPNTTTAH) are compositionally biased toward low complexity.

Belongs to the nuclear hormone receptor family. NR0 subfamily.

It localises to the nucleus. Its function is as follows. Transcriptional repressor. Binds to multiple sites in the eve stripe 3 enhancer element. Plays an essential role in the segmentation process both by refining the expression patterns of gap genes and by establishing pair-rules stripes of gene expression. The polypeptide is Zygotic gap protein knirps (kni) (Drosophila melanogaster (Fruit fly)).